The following is a 422-amino-acid chain: Elongation factor 1-alpha (422 aa).

In terms of domain architecture, tr-type G spans 5–221; the sequence is KPHMNLAVIG…DELKEPEKPS (217 aa). The interval 14–21 is G1; sequence GHIDHGKS. Residue 14-21 coordinates GTP; it reads GHIDHGKS. A Mg(2+)-binding site is contributed by S21. Residues 70–74 are G2; the sequence is GITID. Residues 91–94 are G3; it reads DCPG. GTP-binding positions include 91-95 and 146-149; these read DCPGH and NKMD. The interval 146–149 is G4; the sequence is NKMD. The G5 stretch occupies residues 185–187; sequence SAF.

It belongs to the TRAFAC class translation factor GTPase superfamily. Classic translation factor GTPase family. EF-Tu/EF-1A subfamily.

It localises to the cytoplasm. The catalysed reaction is GTP + H2O = GDP + phosphate + H(+). Functionally, GTP hydrolase that promotes the GTP-dependent binding of aminoacyl-tRNA to the A-site of ribosomes during protein biosynthesis. This chain is Elongation factor 1-alpha, found in Methanosarcina acetivorans (strain ATCC 35395 / DSM 2834 / JCM 12185 / C2A).